Here is a 105-residue protein sequence, read N- to C-terminus: uncharacterized protein (105 aa).

The helical transmembrane segment at 29–49 threads the bilayer; sequence NAFLLILSEAYLLFVFLSYLI.

The protein resides in the membrane. This is an uncharacterized protein from Saccharomyces cerevisiae (strain ATCC 204508 / S288c) (Baker's yeast).